Here is a 220-residue protein sequence, read N- to C-terminus: Artemin (220 aa).

Positions 1–39 are cleaved as a signal peptide; that stretch reads MELGLGGLSTLSHCPWPRQQPALWPTLAALALLSSVAEA. Residues 40–107 constitute a propeptide that is removed on maturation; that stretch reads SLGSAPRSPA…ALPRGGRAAR (68 aa). The segment at 41–121 is disordered; that stretch reads LGSAPRSPAP…GSRARAAGAR (81 aa). 2 stretches are compositionally biased toward pro residues: residues 47 to 58 and 81 to 98; these read SPAPREGPPPVL and PPPQ…PPSA. Residues 99 to 121 are compositionally biased toward low complexity; the sequence is LPRGGRAARAGGPGSRARAAGAR. 3 disulfide bridges follow: C123/C188, C150/C216, and C154/C218. N-linked (GlcNAc...) asparagine glycosylation is present at N202.

Belongs to the TGF-beta family. GDNF subfamily. In terms of assembly, homodimer; disulfide-linked. Interacts with GFRA3 coreceptor and RET: forms a 2:2:2 ternary complex composed of ARTN ligand, GFRA3 and RET receptor. In terms of tissue distribution, ubiquitous. Expressed at high levels in peripheral tissues including prostate, placenta, pancreas, heart, kidney, pituitary gland, lung and testis. Expressed at low levels in the brain.

Its subcellular location is the secreted. Functionally, growth factor that supports the survival of sensory and sympathetic peripheral neurons in culture and also supports the survival of dopaminergic neurons of the ventral mid-brain. Acts by binding to its coreceptor, GFRA3, leading to autophosphorylation and activation of the RET receptor. Strong attractant of gut hematopoietic cells thus promoting the formation Peyer's patch-like structures, a major component of the gut-associated lymphoid tissue. The protein is Artemin of Homo sapiens (Human).